The primary structure comprises 1111 residues: RecBCD enzyme subunit RecC (1111 aa).

This sequence belongs to the RecC family. As to quaternary structure, heterotrimer of RecB, RecC and RecD. All subunits contribute to DNA-binding.

Its function is as follows. A helicase/nuclease that prepares dsDNA breaks (DSB) for recombinational DNA repair. Binds to DSBs and unwinds DNA via a highly rapid and processive ATP-dependent bidirectional helicase activity. Unwinds dsDNA until it encounters a Chi (crossover hotspot instigator) sequence from the 3' direction. Cuts ssDNA a few nucleotides 3' to the Chi site. The properties and activities of the enzyme are changed at Chi. The Chi-altered holoenzyme produces a long 3'-ssDNA overhang and facilitates RecA-binding to the ssDNA for homologous DNA recombination and repair. Holoenzyme degrades any linearized DNA that is unable to undergo homologous recombination. In the holoenzyme this subunit recognizes the wild-type Chi sequence, and when added to isolated RecB increases its ATP-dependent helicase processivity. This Buchnera aphidicola subsp. Baizongia pistaciae (strain Bp) protein is RecBCD enzyme subunit RecC.